Consider the following 624-residue polypeptide: Ferredoxin-fold anticodon-binding domain-containing protein 1 (624 aa).

Residues 531 to 624 (LYPPCYVHDV…IQQHLYVIPR (94 aa)) enclose the FDX-ACB domain.

The polypeptide is Ferredoxin-fold anticodon-binding domain-containing protein 1 (FDXACB1) (Homo sapiens (Human)).